Consider the following 311-residue polypeptide: Mediator of RNA polymerase II transcription subunit 27-B (311 aa).

Belongs to the Mediator complex subunit 27 family. Component of the Mediator complex.

It is found in the nucleus. In terms of biological role, component of the Mediator complex, a coactivator involved in the regulated transcription of nearly all RNA polymerase II-dependent genes. Mediator functions as a bridge to convey information from gene-specific regulatory proteins to the basal RNA polymerase II transcription machinery. Mediator is recruited to promoters by direct interactions with regulatory proteins and serves as a scaffold for the assembly of a functional preinitiation complex with RNA polymerase II and the general transcription factors. The protein is Mediator of RNA polymerase II transcription subunit 27-B (med27-b) of Xenopus laevis (African clawed frog).